A 146-amino-acid polypeptide reads, in one-letter code: Anti-sigma F factor (146 aa).

It belongs to the anti-sigma-factor family.

The catalysed reaction is L-seryl-[protein] + ATP = O-phospho-L-seryl-[protein] + ADP + H(+). It catalyses the reaction L-threonyl-[protein] + ATP = O-phospho-L-threonyl-[protein] + ADP + H(+). Its function is as follows. Binds to sigma F and blocks its ability to form an RNA polymerase holoenzyme (E-sigma F). Phosphorylates SpoIIAA on a serine residue. This phosphorylation may enable SpoIIAA to act as an anti-anti-sigma factor that counteracts SpoIIAB and thus releases sigma F from inhibition. The protein is Anti-sigma F factor of Bacillus anthracis (strain A0248).